A 387-amino-acid polypeptide reads, in one-letter code: Sorting nexin-7 (387 aa).

Residues 30 to 151 (KDLFITVDAP…VFLTAQAEEL (122 aa)) enclose the PX domain. Positions 73, 75, 103, and 117 each coordinate a 1,2-diacyl-sn-glycero-3-phospho-(1D-myo-inositol-3-phosphate). The region spanning 178 to 387 (GVKNRPEEFM…PSEEDSEEKL (210 aa)) is the BAR domain.

Belongs to the sorting nexin family. As to quaternary structure, heterodimer; heterodimerizes with SNX4.

It localises to the early endosome membrane. Its function is as follows. Involved in the regulation of endocytosis and in several stages of intracellular trafficking. Together with SNX4, involved in autophagosome assembly by regulating trafficking and recycling of phospholipid scramblase ATG9A. This Mus musculus (Mouse) protein is Sorting nexin-7.